We begin with the raw amino-acid sequence, 588 residues long: Protein disulfide-isomerase-like protein of the testis (588 aa).

The first 20 residues, 1–20 (MELLWTPLLLVAACLSEVLG), serve as a signal peptide directing secretion. Asparagine 55, asparagine 157, and asparagine 337 each carry an N-linked (GlcNAc...) asparagine glycan. Positions 385-448 (PVKKLVGKNF…IAKIDITAND (64 aa)) constitute a Thioredoxin domain. 3 stretches are compositionally biased toward basic and acidic residues: residues 531-542 (IEDTSKQDRPVK), 549-567 (SIRK…EREA), and 574-588 (EQPK…KEEL). A disordered region spans residues 531 to 588 (IEDTSKQDRPVKESPVLDSIRKPEEPERRKETAEREAAAAQPKEQPKPERKLEVKEEL). The Prevents secretion from ER motif lies at 585 to 588 (KEEL).

It belongs to the protein disulfide isomerase family. As to quaternary structure, homodimer. The homodimer is not disulfide-linked. Interacts with CLGN and ERO1A. N-glycosylated. In terms of tissue distribution, testis-specific (at protein level).

Its subcellular location is the endoplasmic reticulum. Functionally, probable redox-inactive chaperone involved in spermatogenesis. The sequence is that of Protein disulfide-isomerase-like protein of the testis (Pdilt) from Mus musculus (Mouse).